Reading from the N-terminus, the 838-residue chain is Histidine biosynthesis trifunctional protein (838 aa).

The tract at residues 1 to 271 (MIFPILPVIS…MVEPRTGYGF (271 aa)) is phosphoribosyl-AMP cyclohydrolase. Residues 272–360 (CHRETKFTCF…VYFAMVWCIK (89 aa)) form a phosphoribosyl-ATP pyrophosphohydrolase region. The segment at 361–838 (HGVRLADIEK…IRMERMAETK (478 aa)) is histidinol dehydrogenase. Glutamine 660 and histidine 663 together coordinate Zn(2+). Residues glutamate 729 and histidine 730 contribute to the active site. 2 residues coordinate Zn(2+): aspartate 764 and histidine 823.

The protein in the C-terminal section; belongs to the histidinol dehydrogenase family. The cofactor is Zn(2+).

It carries out the reaction 1-(5-phospho-beta-D-ribosyl)-5'-AMP + H2O = 1-(5-phospho-beta-D-ribosyl)-5-[(5-phospho-beta-D-ribosylamino)methylideneamino]imidazole-4-carboxamide. The enzyme catalyses 1-(5-phospho-beta-D-ribosyl)-ATP + H2O = 1-(5-phospho-beta-D-ribosyl)-5'-AMP + diphosphate + H(+). It catalyses the reaction L-histidinol + 2 NAD(+) + H2O = L-histidine + 2 NADH + 3 H(+). The protein operates within amino-acid biosynthesis; L-histidine biosynthesis; L-histidine from 5-phospho-alpha-D-ribose 1-diphosphate: step 2/9. It functions in the pathway amino-acid biosynthesis; L-histidine biosynthesis; L-histidine from 5-phospho-alpha-D-ribose 1-diphosphate: step 3/9. Its pathway is amino-acid biosynthesis; L-histidine biosynthesis; L-histidine from 5-phospho-alpha-D-ribose 1-diphosphate: step 9/9. The polypeptide is Histidine biosynthesis trifunctional protein (HIS4) (Candida albicans (Yeast)).